The sequence spans 431 residues: Anaerobic glycerol-3-phosphate dehydrogenase subunit B (431 aa).

Belongs to the anaerobic G-3-P dehydrogenase subunit B family. Composed of a catalytic GlpA/B dimer and of membrane bound GlpC. FMN serves as cofactor.

It catalyses the reaction a quinone + sn-glycerol 3-phosphate = dihydroxyacetone phosphate + a quinol. It participates in polyol metabolism; glycerol degradation via glycerol kinase pathway; glycerone phosphate from sn-glycerol 3-phosphate (anaerobic route): step 1/1. In terms of biological role, conversion of glycerol 3-phosphate to dihydroxyacetone. Uses fumarate or nitrate as electron acceptor. In Mannheimia succiniciproducens (strain KCTC 0769BP / MBEL55E), this protein is Anaerobic glycerol-3-phosphate dehydrogenase subunit B.